Consider the following 465-residue polypeptide: Glutamate--tRNA ligase 2 (465 aa).

A 'HIGH' region motif is present at residues 8–18 (PSPTGLMHLGN). Positions 249–253 (PLSKR) match the 'KMSKS' region motif. An ATP-binding site is contributed by Lys-252.

Belongs to the class-I aminoacyl-tRNA synthetase family. Glutamate--tRNA ligase type 1 subfamily. In terms of assembly, monomer.

Its subcellular location is the cytoplasm. It catalyses the reaction tRNA(Glu) + L-glutamate + ATP = L-glutamyl-tRNA(Glu) + AMP + diphosphate. In terms of biological role, catalyzes the attachment of glutamate to tRNA(Glu) in a two-step reaction: glutamate is first activated by ATP to form Glu-AMP and then transferred to the acceptor end of tRNA(Glu). This is Glutamate--tRNA ligase 2 from Coxiella burnetii (strain RSA 331 / Henzerling II).